Consider the following 137-residue polypeptide: Large ribosomal subunit protein uL16 (137 aa).

This sequence belongs to the universal ribosomal protein uL16 family. As to quaternary structure, part of the 50S ribosomal subunit.

Its function is as follows. Binds 23S rRNA and is also seen to make contacts with the A and possibly P site tRNAs. The chain is Large ribosomal subunit protein uL16 from Nitratidesulfovibrio vulgaris (strain DSM 19637 / Miyazaki F) (Desulfovibrio vulgaris).